A 181-amino-acid polypeptide reads, in one-letter code: TATA-box-binding protein (181 aa).

2 repeat units span residues Val-7 to Leu-83 and Val-98 to Leu-173.

It belongs to the TBP family.

Its function is as follows. General factor that plays a role in the activation of archaeal genes transcribed by RNA polymerase. Binds specifically to the TATA box promoter element which lies close to the position of transcription initiation. The polypeptide is TATA-box-binding protein (Methanococcus maripaludis (strain DSM 14266 / JCM 13030 / NBRC 101832 / S2 / LL)).